The chain runs to 194 residues: Imidazoleglycerol-phosphate dehydratase (194 aa).

The protein belongs to the imidazoleglycerol-phosphate dehydratase family.

The protein localises to the cytoplasm. It carries out the reaction D-erythro-1-(imidazol-4-yl)glycerol 3-phosphate = 3-(imidazol-4-yl)-2-oxopropyl phosphate + H2O. It functions in the pathway amino-acid biosynthesis; L-histidine biosynthesis; L-histidine from 5-phospho-alpha-D-ribose 1-diphosphate: step 6/9. The sequence is that of Imidazoleglycerol-phosphate dehydratase from Chlorobaculum parvum (strain DSM 263 / NCIMB 8327) (Chlorobium vibrioforme subsp. thiosulfatophilum).